The primary structure comprises 167 residues: Phosphopantetheine adenylyltransferase (167 aa).

Position 13 (Thr13) interacts with substrate. ATP-binding positions include 13-14 (TF) and His21. Substrate is bound by residues Lys45, Leu78, and Arg92. ATP contacts are provided by residues 93 to 95 (GLR), Glu103, and 128 to 134 (TQFISSS).

The protein belongs to the bacterial CoaD family. Homohexamer. Requires Mg(2+) as cofactor.

The protein resides in the cytoplasm. It carries out the reaction (R)-4'-phosphopantetheine + ATP + H(+) = 3'-dephospho-CoA + diphosphate. It participates in cofactor biosynthesis; coenzyme A biosynthesis; CoA from (R)-pantothenate: step 4/5. Functionally, reversibly transfers an adenylyl group from ATP to 4'-phosphopantetheine, yielding dephospho-CoA (dPCoA) and pyrophosphate. This chain is Phosphopantetheine adenylyltransferase, found in Wolbachia sp. subsp. Brugia malayi (strain TRS).